The following is a 443-amino-acid chain: MAKYFGTDGIRGEVGKSVIKAEFMQKLGNAVGTLINDNGYPGFVIIGQDTRSSGKFLKFALVSGLNAAGIDVIDLGVVPTPIVAFMTVKYKAAAGFVITASHNKFTDNGVKLFSSSGFKLDDALEEEVEAKIDSDFIYQTECKFGNYKVAENFIDEYIENLFERFGSLVNYKGKVVIDCANGAASNHFEALLDRFCIDYISVASNPDGLNINVDCGATCTSNIKKAVIEHNADLGISLDGDADRIIIVDENAQEIDGDGILNIIAQYSNICGGTTGIVGTQMTNMSYENHYKSNNIPFIRSKVGDRYVLEDLVKHGYKIGGESSGHVINLNFGTTGDGLSTAIQLLAIFSQSDKPVSAFKLPGELMQQTMINVPLNFKVTSDHLAKLAGDVAKAEERLGSRGRVLLRPSGTEPVLRVMVEADTKDLATKEAEYLVEKVKQKLV.

Serine 101 serves as the catalytic Phosphoserine intermediate. Residues serine 101, aspartate 239, aspartate 241, and aspartate 243 each contribute to the Mg(2+) site. Residue serine 101 is modified to Phosphoserine.

It belongs to the phosphohexose mutase family. The cofactor is Mg(2+). Activated by phosphorylation.

The catalysed reaction is alpha-D-glucosamine 1-phosphate = D-glucosamine 6-phosphate. Catalyzes the conversion of glucosamine-6-phosphate to glucosamine-1-phosphate. The chain is Phosphoglucosamine mutase from Francisella philomiragia subsp. philomiragia (strain ATCC 25017 / CCUG 19701 / FSC 153 / O#319-036).